Here is a 425-residue protein sequence, read N- to C-terminus: Glutamate-1-semialdehyde 2,1-aminomutase (425 aa).

Position 265 is an N6-(pyridoxal phosphate)lysine (Lys-265).

Belongs to the class-III pyridoxal-phosphate-dependent aminotransferase family. HemL subfamily. In terms of assembly, homodimer. The cofactor is pyridoxal 5'-phosphate.

It is found in the cytoplasm. The enzyme catalyses (S)-4-amino-5-oxopentanoate = 5-aminolevulinate. The protein operates within porphyrin-containing compound metabolism; protoporphyrin-IX biosynthesis; 5-aminolevulinate from L-glutamyl-tRNA(Glu): step 2/2. This is Glutamate-1-semialdehyde 2,1-aminomutase from Thiobacillus denitrificans (strain ATCC 25259 / T1).